Consider the following 321-residue polypeptide: MSKPVRMEPGVKLRDGDKMALIPVKFMPDPNEEVLRKPDWMRIKLPPSSQKIEHIKSTLRKNKLHSVCEEASCPNLAECFNHGTATFMIMGAICTRRCPFCDVAHGRPLALDPDEPKKLALTIKEMGLKYVVITSVDRDDLRDGGAQHFADCIKQIREHSPQTRIEILTPDFRGRMEQALEVFRETPPDVFNHNLETAPRMYRVARPGADYKWSLELLRRIKEMHPHVPTKSGVMMGLGETNEEIVQVLKDLREHGVNMLTLGQYLQPSRHHLPVKRYVPPAEFDELKDVAMGLGFSHAACGPFVRSSYHADLQAKGEEVK.

The [4Fe-4S] cluster site is built by Cys68, Cys73, Cys79, Cys94, Cys98, Cys101, and Ser308. One can recognise a Radical SAM core domain in the interval 80–297 (FNHGTATFMI…KDVAMGLGFS (218 aa)).

It belongs to the radical SAM superfamily. Lipoyl synthase family. It depends on [4Fe-4S] cluster as a cofactor.

It is found in the cytoplasm. It catalyses the reaction [[Fe-S] cluster scaffold protein carrying a second [4Fe-4S](2+) cluster] + N(6)-octanoyl-L-lysyl-[protein] + 2 oxidized [2Fe-2S]-[ferredoxin] + 2 S-adenosyl-L-methionine + 4 H(+) = [[Fe-S] cluster scaffold protein] + N(6)-[(R)-dihydrolipoyl]-L-lysyl-[protein] + 4 Fe(3+) + 2 hydrogen sulfide + 2 5'-deoxyadenosine + 2 L-methionine + 2 reduced [2Fe-2S]-[ferredoxin]. The protein operates within protein modification; protein lipoylation via endogenous pathway; protein N(6)-(lipoyl)lysine from octanoyl-[acyl-carrier-protein]: step 2/2. Functionally, catalyzes the radical-mediated insertion of two sulfur atoms into the C-6 and C-8 positions of the octanoyl moiety bound to the lipoyl domains of lipoate-dependent enzymes, thereby converting the octanoylated domains into lipoylated derivatives. The chain is Lipoyl synthase from Aeromonas hydrophila subsp. hydrophila (strain ATCC 7966 / DSM 30187 / BCRC 13018 / CCUG 14551 / JCM 1027 / KCTC 2358 / NCIMB 9240 / NCTC 8049).